The primary structure comprises 98 residues: DNA-binding protein Fis (98 aa).

A DNA-binding region (H-T-H motif) is located at residues 74–93; it reads QTRAALMMGINRGTLRKKLK.

Belongs to the transcriptional regulatory Fis family. Homodimer.

Functionally, activates ribosomal RNA transcription. Plays a direct role in upstream activation of rRNA promoters. This is DNA-binding protein Fis from Enterobacter sp. (strain 638).